Consider the following 195-residue polypeptide: Thymidine kinase (195 aa).

ATP is bound by residues 15–22 and 88–91; these read GSMFSGKS and DEVQ. The active-site Proton acceptor is the glutamate 89. Residues cysteine 145, cysteine 148, cysteine 183, and residue 186 each coordinate Zn(2+).

Belongs to the thymidine kinase family. In terms of assembly, homotetramer.

The protein resides in the cytoplasm. It catalyses the reaction thymidine + ATP = dTMP + ADP + H(+). In Bacillus cereus (strain ATCC 10987 / NRS 248), this protein is Thymidine kinase.